The primary structure comprises 722 residues: Zinc finger protein 219 (722 aa).

Residues methionine 1 to aspartate 21 form a disordered region. Serine 16 carries the post-translational modification Phosphoserine. 2 C2H2-type zinc fingers span residues phenylalanine 57–histidine 79 and phenylalanine 85–histidine 107. The tract at residues alanine 137–serine 160 is disordered. C2H2-type zinc fingers lie at residues phenylalanine 163–histidine 186 and tryptophan 189–histidine 212. The tract at residues proline 215–arginine 275 is disordered. Pro residues-rich tracts occupy residues alanine 225 to glutamate 247 and threonine 259 to proline 272. 2 C2H2-type zinc fingers span residues phenylalanine 274 to histidine 296 and histidine 302 to histidine 324. Residues leucine 384–alanine 495 are disordered. Residues arginine 390–phenylalanine 404 show a composition bias toward gly residues. The span at glutamate 425–glutamate 438 shows a compositional bias: acidic residues. A compositionally biased stretch (low complexity) spans serine 463–glutamine 477. 2 consecutive C2H2-type zinc fingers follow at residues lysine 498 to histidine 520 and tyrosine 526 to histidine 548. Disordered regions lie at residues lysine 542–cysteine 648 and histidine 668–arginine 722. A compositionally biased stretch (pro residues) spans proline 558–serine 568. Positions glycine 634–glycine 643 are enriched in gly residues. The segment at histidine 646 to histidine 668 adopts a C2H2-type 9 zinc-finger fold. Residues histidine 668 to arginine 677 are compositionally biased toward basic residues. The residue at position 692 (serine 692) is a Phosphoserine. Threonine 695 carries the post-translational modification Phosphothreonine. A Phosphoserine modification is found at serine 698.

This sequence belongs to the krueppel C2H2-type zinc-finger protein family. In terms of assembly, interacts with SOX9 (via C-terminus). Ubiquitous.

The protein localises to the nucleus. Its function is as follows. Transcriptional regulator. Recognizes and binds 2 copies of the core DNA sequence motif 5'-GGGGG-3'. Binds to the HMGN1 promoter and may repress HMGN1 expression. Regulates SNCA expression in primary cortical neurons. Binds to the COL2A1 promoter and activates COL2A1 expression, as part of a complex with SOX9. Plays a role in chondrocyte differentiation. The polypeptide is Zinc finger protein 219 (ZNF219) (Homo sapiens (Human)).